A 328-amino-acid polypeptide reads, in one-letter code: Neuropeptides B/W receptor type 1 (328 aa).

Over 1–37 (MDNASFSEPWPANASGPDPALSCSNASTLAPLPAPLA) the chain is Extracellular. N-linked (GlcNAc...) asparagine glycans are attached at residues asparagine 3, asparagine 13, and asparagine 25. The helical transmembrane segment at 38–61 (VAVPVVYAVICAVGLAGNSAVLYV) threads the bilayer. The Cytoplasmic portion of the chain corresponds to 62–72 (LLRAPRMKTVT). Residues 73–97 (NLFILNLAIADELFTLVLPINIADF) form a helical membrane-spanning segment. Residues 98–112 (LLRQWPFGELMCKLI) lie on the Extracellular side of the membrane. Cysteines 109 and 188 form a disulfide. The helical transmembrane segment at 113 to 132 (VAIDQYNTFSSLYFLTVMSA) threads the bilayer. Over 133–157 (DRYLVVLATAESRRVAGRTYSAARA) the chain is Cytoplasmic. The chain crosses the membrane as a helical span at residues 158–177 (VSLAVWGIVTLVVLPFAVFA). Residues 178 to 202 (RLDDEQGRRQCVLVFPQPEAFWWRA) are Extracellular-facing. The helical transmembrane segment at 203 to 224 (SRLYTLVLGFAIPVSTICVLYT) threads the bilayer. The Cytoplasmic portion of the chain corresponds to 225–248 (TLLCRLHAMRLDSHAKALERAKKR). The chain crosses the membrane as a helical span at residues 249 to 273 (VTFLVVAILAVCLLCWTPYHLSTVV). At 274–283 (ALTTDLPQTP) the chain is on the extracellular side. A helical transmembrane segment spans residues 284–298 (LVIAISYFITSLSYA). Topologically, residues 299–328 (NSCLNPFLYAFLDASFRRNLRQLITCRAAA) are cytoplasmic.

The protein belongs to the G-protein coupled receptor 1 family. In terms of tissue distribution, found in cerebellum and frontal cortex. Detected at high levels in hippocampus, amygdala and trachea; at moderate levels in fetal brain, pituitary gland and prostate. Not in caudate, accumbens, kidney or liver. Also detected at high levels in lung carcinoma.

The protein localises to the cell membrane. In terms of biological role, interacts specifically with a number of opioid ligands. Receptor for neuropeptides B and W, which may be involved in neuroendocrine system regulation, food intake and the organization of other signals. Has a higher affinity for neuropeptide B. The sequence is that of Neuropeptides B/W receptor type 1 (NPBWR1) from Homo sapiens (Human).